Here is a 125-residue protein sequence, read N- to C-terminus: Putative iron-sulfur cluster insertion protein ErpA 2 (125 aa).

Iron-sulfur cluster-binding residues include Cys-53, Cys-117, and Cys-119.

Belongs to the HesB/IscA family. As to quaternary structure, homodimer. The cofactor is iron-sulfur cluster.

In terms of biological role, required for insertion of 4Fe-4S clusters. The chain is Putative iron-sulfur cluster insertion protein ErpA 2 from Polaromonas naphthalenivorans (strain CJ2).